A 322-amino-acid chain; its full sequence is MNKPKIFIDGEAGTTGLQIYSRLNERDDIELVSIAASKRKDADERAKLLNSVDVAILCLPDDAAREAVSLVNSSQVKILDASTAYRTAQGWVYGFPEMNPGQREKIANAQFVSNPGCYPTGFLACVRPLIAQGILPSSFPITINAVSGYSGGGKSLIQKYDSFHEQQKGATSDYPFGIYGLQFGHKHVKEMHQHSGLASPPLFIPAVGDFEQGMLVQIPLPLWTLDNPPSGEEIHQAIAQYYQGEKFVQVAPFKDPSLLRDGTFLDATAVNGTNIVQVFVFGNDNTKEALLVARLDNLGKGASGAAVQNLNIMLGLPEELGL.

C117 is a catalytic residue.

Belongs to the NAGSA dehydrogenase family. Type 2 subfamily.

It is found in the cytoplasm. It catalyses the reaction N-acetyl-L-glutamate 5-semialdehyde + phosphate + NADP(+) = N-acetyl-L-glutamyl 5-phosphate + NADPH + H(+). It participates in amino-acid biosynthesis; L-arginine biosynthesis; N(2)-acetyl-L-ornithine from L-glutamate: step 3/4. Its function is as follows. Catalyzes the NADPH-dependent reduction of N-acetyl-5-glutamyl phosphate to yield N-acetyl-L-glutamate 5-semialdehyde. This chain is N-acetyl-gamma-glutamyl-phosphate reductase 2, found in Nostoc sp. (strain PCC 7120 / SAG 25.82 / UTEX 2576).